A 485-amino-acid chain; its full sequence is Subtilisin-like protease 1 (485 aa).

Residues 1 to 19 (MGIFRFISISLAAVSAANA) form the signal peptide. The propeptide occupies 20–116 (GHILSMGHAK…VEPDTTITIH (97 aa)). An Inhibitor I9 domain is found at 34–116 (SYIVVMKDGT…VEPDTTITIH (83 aa)). One can recognise a Peptidase S8 domain in the interval 126–400 (SWGLARISSQ…NILINNGDAK (275 aa)). Catalysis depends on charge relay system residues Asp-158 and His-190. Residue Asn-251 is glycosylated (N-linked (GlcNAc...) asparagine). Catalysis depends on Ser-345, which acts as the Charge relay system. A compositionally biased stretch (polar residues) spans 377-394 (GTSSVTNPGPGTRTNILI). Residues 377-462 (GTSSVTNPGP…HTPFPNDDFN (86 aa)) are disordered. Positions 409–418 (PSQPPKPSQP) are enriched in pro residues. The segment covering 419 to 428 (SKPQQPSEPQ) has biased composition (low complexity). Over residues 433–455 (PQEPAPGQPAPAPAPVPQHPHTP) the composition is skewed to pro residues.

Belongs to the peptidase S8 family.

The protein resides in the secreted. In terms of biological role, secreted subtilisin-like serine protease with keratinolytic activity that contributes to pathogenicity. The polypeptide is Subtilisin-like protease 1 (SUB1) (Arthroderma otae (strain ATCC MYA-4605 / CBS 113480) (Microsporum canis)).